We begin with the raw amino-acid sequence, 408 residues long: Secreted mono- and diacylglycerol lipase 2 (408 aa).

The signal sequence occupies residues 1-24 (MRFKLADSLSLITVQLILATSTLA). Asparagine 177 is a glycosylation site (N-linked (GlcNAc...) asparagine). Catalysis depends on serine 217, which acts as the Nucleophile. Catalysis depends on residues aspartate 283 and histidine 374.

It belongs to the AB hydrolase superfamily. Lipase family. Class 3 subfamily.

It localises to the secreted. It catalyses the reaction a monoacylglycerol + H2O = glycerol + a fatty acid + H(+). The catalysed reaction is a diacylglycerol + H2O = a monoacylglycerol + a fatty acid + H(+). Functionally, secreted mono- and diacylglycerol lipase involved in plant virulence. Has a substrate preference for p-nitrophenyl esters with a carbon chain length of C10 (p-nitrophenyl caprate). This is Secreted mono- and diacylglycerol lipase 2 from Gibberella zeae (strain ATCC MYA-4620 / CBS 123657 / FGSC 9075 / NRRL 31084 / PH-1) (Wheat head blight fungus).